The sequence spans 392 residues: Peptidoglycan hydrolase PcsB (392 aa).

The signal sequence occupies residues 1–27; sequence MKKKILASLLLSTVMVSQVAVLTTAHA. 2 coiled-coil regions span residues 34-96 and 191-227; these read IAAQ…LSKN and TKQA…AEAE. The interacts with large extracellular loop of FtsX stretch occupies residues 47 to 267; the sequence is QQQEAQKQVD…TAQVQAVSES (221 aa). The Peptidase C51 domain occupies 267–390; that stretch reads SAAAPVRAKV…TSEGFVTYIY (124 aa).

In terms of assembly, homodimer. Interacts (via N-terminal coiled coil domain) with FtsX (via large extracellular loop). This interaction directs PcsB to equatorial and septal sites of dividing cells. Interacts with FtsE.

The protein resides in the cell membrane. The protein localises to the cell septum. Its subcellular location is the secreted. With respect to regulation, lacks peptidoglycan-hydrolase activity in vitro, probably due to auto-inhibition by the CC domain. In the homodimer, interaction between the CC domain in one monomer and the hydrolase active site in the peptidase C51/CHAP domain in the other monomer probably mediates auto-inhibition of the hydrolase activity. In terms of biological role, peptidoglycan-hydrolase activity. Required in maintaining normal growth and cellular morphology. Involved in splitting of the septum during cell division. This Streptococcus pneumoniae serotype 2 (strain D39 / NCTC 7466) protein is Peptidoglycan hydrolase PcsB.